The chain runs to 307 residues: Ribonuclease Z (307 aa).

7 residues coordinate Zn(2+): H63, H65, D67, H68, H141, D212, and H270. D67 functions as the Proton acceptor in the catalytic mechanism.

This sequence belongs to the RNase Z family. Homodimer. Zn(2+) serves as cofactor.

The enzyme catalyses Endonucleolytic cleavage of RNA, removing extra 3' nucleotides from tRNA precursor, generating 3' termini of tRNAs. A 3'-hydroxy group is left at the tRNA terminus and a 5'-phosphoryl group is left at the trailer molecule.. Functionally, zinc phosphodiesterase, which displays some tRNA 3'-processing endonuclease activity. Probably involved in tRNA maturation, by removing a 3'-trailer from precursor tRNA. This is Ribonuclease Z from Bacillus cereus (strain B4264).